The primary structure comprises 219 residues: Claudin-3 (219 aa).

At 1–8 (MSMGLEIT) the chain is on the cytoplasmic side. Residues 9–29 (GTSLAVLGWLCTIVCCALPMW) form a helical membrane-spanning segment. Residues 30 to 80 (RVSAFIGSSIITAQITWEGLWMNCVVQSTGQMQCKMYDSLLALPQDLQAAR) are Extracellular-facing. Residues 81-101 (ALIVVSILLAAFGLLVALVGA) traverse the membrane as a helical segment. Topologically, residues 102–115 (QCTNCVQDETAKAK) are cytoplasmic. The chain crosses the membrane as a helical span at residues 116 to 136 (ITIVAGVLFLLAALLTLVPVS). Residues 137–159 (WSANTIIRDFYNPLVPEAQKREM) are Extracellular-facing. A helical transmembrane segment spans residues 160–180 (GAGLYVGWAAAALQLLGGALL). At 181–219 (CCSCPPRDKYAPTKILYSAPRSTGPGTGTGTAYDRKDYV) the chain is on the cytoplasmic side. Tyr197 is modified (phosphotyrosine). Residue Ser198 is modified to Phosphoserine. The interval 218 to 219 (YV) is interactions with TJP1, TJP2 and TJP3.

The protein belongs to the claudin family. In terms of assembly, can form homo- and heteropolymers with other CLDN. Homopolymers interact with CLDN1 and CLDN2 homopolymers. Interacts in cis (within the same plasma membrane) with CLDN19. Directly interacts with TJP1/ZO-1, TJP2/ZO-2 and TJP3/ZO-3. As to quaternary structure, (Microbial infection) Interacts with Clostridium perfringens enterotoxin CPE; the interaction may disrupt claudin assembly in tight junctions. As to expression, expressed in the lung. Expressed at high levels in the liver and at lower levels, in kidney and testis.

Its subcellular location is the cell junction. The protein resides in the tight junction. It localises to the cell membrane. Its function is as follows. Plays a major role in tight junction-specific obliteration of the intercellular space, through calcium-independent cell-adhesion activity. The chain is Claudin-3 (Cldn3) from Mus musculus (Mouse).